Consider the following 208-residue polypeptide: FMN-dependent NADH:quinone oxidoreductase 1 (208 aa).

S10 is an FMN binding site.

It belongs to the azoreductase type 1 family. In terms of assembly, homodimer. FMN is required as a cofactor.

It catalyses the reaction 2 a quinone + NADH + H(+) = 2 a 1,4-benzosemiquinone + NAD(+). The catalysed reaction is N,N-dimethyl-1,4-phenylenediamine + anthranilate + 2 NAD(+) = 2-(4-dimethylaminophenyl)diazenylbenzoate + 2 NADH + 2 H(+). Its function is as follows. Quinone reductase that provides resistance to thiol-specific stress caused by electrophilic quinones. Contributes to resistance to 2-methylhydroquinone (2-MHQ) and catechol. Functionally, also exhibits azoreductase activity. Catalyzes the reductive cleavage of the azo bond in aromatic azo compounds to the corresponding amines. The sequence is that of FMN-dependent NADH:quinone oxidoreductase 1 from Bacillus subtilis (strain 168).